Consider the following 511-residue polypeptide: Coatomer subunit delta (511 aa).

The segment covering 167-177 (QQARRDAERQG) has biased composition (basic and acidic residues). The segment at 167-188 (QQARRDAERQGKKAPGFGGFGS) is disordered. Ser223 is modified (phosphoserine). Lys233 and Lys241 each carry N6-acetyllysine. Ser244 carries the phosphoserine modification. In terms of domain architecture, MHD spans 271 to 511 (MESVHMKIEE…TFLVDKYEIL (241 aa)). N6-acetyllysine occurs at positions 309 and 351. A Phosphoserine modification is found at Ser493.

Belongs to the adaptor complexes medium subunit family. Delta-COP subfamily. As to quaternary structure, oligomeric complex that consists of at least the alpha, beta, beta', gamma, delta, epsilon and zeta subunits.

The protein localises to the cytoplasm. The protein resides in the golgi apparatus membrane. Its subcellular location is the cytoplasmic vesicle. It is found in the COPI-coated vesicle membrane. Functionally, the coatomer is a cytosolic protein complex that binds to dilysine motifs and reversibly associates with Golgi non-clathrin-coated vesicles, which further mediate biosynthetic protein transport from the ER, via the Golgi up to the trans Golgi network. Coatomer complex is required for budding from Golgi membranes, and is essential for the retrograde Golgi-to-ER transport of dilysine-tagged proteins. In mammals, the coatomer can only be recruited by membranes associated to ADP-ribosylation factors (ARFs), which are small GTP-binding proteins; the complex also influences the Golgi structural integrity, as well as the processing, activity, and endocytic recycling of LDL receptors. This is Coatomer subunit delta (ARCN1) from Pongo abelii (Sumatran orangutan).